Reading from the N-terminus, the 1031-residue chain is Error-prone DNA polymerase (1031 aa).

It belongs to the DNA polymerase type-C family. DnaE2 subfamily.

It is found in the cytoplasm. It carries out the reaction DNA(n) + a 2'-deoxyribonucleoside 5'-triphosphate = DNA(n+1) + diphosphate. Its function is as follows. DNA polymerase involved in damage-induced mutagenesis and translesion synthesis (TLS). It is not the major replicative DNA polymerase. The sequence is that of Error-prone DNA polymerase from Pseudomonas savastanoi pv. phaseolicola (strain 1448A / Race 6) (Pseudomonas syringae pv. phaseolicola (strain 1448A / Race 6)).